The following is a 311-amino-acid chain: Ketoisovalerate oxidoreductase subunit VorB (311 aa).

Heterotetramer of one alpha, one beta, one delta and one gamma chain.

It carries out the reaction 3-methyl-2-oxobutanoate + 2 oxidized [2Fe-2S]-[ferredoxin] + CoA = 2-methylpropanoyl-CoA + 2 reduced [2Fe-2S]-[ferredoxin] + CO2 + H(+). This is Ketoisovalerate oxidoreductase subunit VorB (vorB) from Pyrococcus furiosus (strain ATCC 43587 / DSM 3638 / JCM 8422 / Vc1).